The chain runs to 242 residues: Octanoyltransferase (242 aa).

The BPL/LPL catalytic domain occupies 31–206; that stretch reads SQTTDEIWFL…LFLKNFGYNQ (176 aa). Residues 70 to 77, 137 to 139, and 150 to 152 contribute to the substrate site; these read RGGQVTYH, SIG, and GLA. C168 acts as the Acyl-thioester intermediate in catalysis.

It belongs to the LipB family.

Its subcellular location is the cytoplasm. It carries out the reaction octanoyl-[ACP] + L-lysyl-[protein] = N(6)-octanoyl-L-lysyl-[protein] + holo-[ACP] + H(+). Its pathway is protein modification; protein lipoylation via endogenous pathway; protein N(6)-(lipoyl)lysine from octanoyl-[acyl-carrier-protein]: step 1/2. In terms of biological role, catalyzes the transfer of endogenously produced octanoic acid from octanoyl-acyl-carrier-protein onto the lipoyl domains of lipoate-dependent enzymes. Lipoyl-ACP can also act as a substrate although octanoyl-ACP is likely to be the physiological substrate. In Coxiella burnetii (strain CbuG_Q212) (Coxiella burnetii (strain Q212)), this protein is Octanoyltransferase.